The following is a 131-amino-acid chain: L-ectoine synthase (131 aa).

This sequence belongs to the ectoine synthase family.

The enzyme catalyses (2S)-4-acetamido-2-aminobutanoate = L-ectoine + H2O. The protein operates within amine and polyamine biosynthesis; ectoine biosynthesis; L-ectoine from L-aspartate 4-semialdehyde: step 3/3. Its function is as follows. Catalyzes the circularization of gamma-N-acetyl-alpha,gamma-diaminobutyric acid (ADABA) to ectoine (1,4,5,6-tetrahydro-2-methyl-4-pyrimidine carboxylic acid), which is an excellent osmoprotectant. In Wolinella succinogenes (strain ATCC 29543 / DSM 1740 / CCUG 13145 / JCM 31913 / LMG 7466 / NCTC 11488 / FDC 602W) (Vibrio succinogenes), this protein is L-ectoine synthase.